The following is a 21-amino-acid chain: Trypsin (21 aa).

The protein belongs to the peptidase S1 family.

It is found in the secreted. The protein localises to the extracellular space. It carries out the reaction Preferential cleavage: Arg-|-Xaa, Lys-|-Xaa.. The polypeptide is Trypsin (Apis mellifera scutellata (Africanized honey bee)).